An 855-amino-acid chain; its full sequence is MVVMARVPRSERPDLVFEEEDLPYEEEIMRNQFSVKCWLRYIEFKQGAPKPRLNQLYERALKLLPCSYKLWYRYLKARRAQVKHRCVTDPAYEDVNNCHERAFVFMHKMPRLWLDYCQFLMDQGRVTHTRRTFDRALRALPITQHSRIWPLYLRFLRSHPLPETAVRGYRRFLKLSPESAEEYIEYLKSSDRLDEAAQRLATVVNDERFVSKAGKSNYQLWHELCDLISQNPDKVQSLNVDAIIRGGLTRFTDQLGKLWCSLADYYIRSGHFEKARDVYEEAIRTVMTVRDFTQVFDSYAQFEESMIAAKMETASELGREEEDDVDLELRLARFEQLISRRPLLLNSVLLRQNPHHVHEWHKRVALHQGRPREIINTYTEAVQTVDPFKATGKPHTLWVAFAKFYEDNGQLDDARVILEKATKVNFKQVDDLASVWCQCGELELRHENYDEALKLLRKATALPARRAEYFDGSEPVQNRVYKSLKVWSMLADLEESLGTFQSTKAVYDRILDLRIATPQIVINYAMFLEEHKYFEESFKAYERGISLFKWPNVSDIWSTYLTKFISRYGGRKLERARDLFEQALDGCPPKYAKTLYLLYAQLEEEWGLARHAMAVYDRATRAVEPAQQYDMFNIYIKRAAEIYGVTHTRGIYQKAIEVLSDEHAREMCLRFADMECKLGEIDRARAIYSFCSQICDPRTTGAFWQTWKDFEVRHGNEDTIREMLRIRRSVQATYNTQVNFMASQMLKVSGSATGTVSDLAPGQSGMDDMKLLEQRAEQLAAEAERDQPPRAQSKIFFVRSDASREELAELAQQANPEEIQLGEDEDEDEMDLEPNEVRLEQQSVPAAVFGSLKED.

9 HAT repeats span residues 15–47 (LVFEEEDLPYEEEIMRNQFSVKCWLRYIEFKQG), 48–80 (APKPRLNQLYERALKLLPCSYKLWYRYLKARRA), 90–122 (PAYEDVNNCHERAFVFMHKMPRLWLDYCQFLMD), 124–158 (GRVTHTRRTFDRALRALPITQHSRIWPLYLRFLRS), 160–192 (PLPETAVRGYRRFLKLSPESAEEYIEYLKSSDR), 198–230 (QRLATVVNDERFVSKAGKSNYQLWHELCDLISQ), 235–268 (VQSLNVDAIIRGGLTRFTDQLGKLWCSLADYYIR), 270–305 (GHFEKARDVYEEAIRTVMTVRDFTQVFDSYAQFEES), and 369–407 (GRPREIINTYTEAVQTVDPFKATGKPHTLWVAFAKFYED). Residue Lys420 is modified to N6-acetyllysine. 5 HAT repeats span residues 498–530 (GTFQSTKAVYDRILDLRIATPQIVINYAMFLEE), 532–566 (KYFEESFKAYERGISLFKWPNVSDIWSTYLTKFIS), 571–605 (RKLERARDLFEQALDGCPPKYAKTLYLLYAQLEEE), 643–677 (YGVTHTRGIYQKAIEVLSDEHAREMCLRFADMECK), and 679–713 (GEIDRARAIYSFCSQICDPRTTGAFWQTWKDFEVR). The segment at 808–855 (AELAQQANPEEIQLGEDEDEDEMDLEPNEVRLEQQSVPAAVFGSLKED) is disordered. Acidic residues predominate over residues 820–834 (QLGEDEDEDEMDLEP). Phosphoserine is present on Ser851.

It belongs to the crooked-neck family. As to quaternary structure, associates with RNA polymerase II, the TCR-specific proteins CKN1/CSA and ERCC6/CSB, and XPA. Identified in the spliceosome C complex. Component of the XAB2 complex, a multimeric protein complex composed of XAB2, PRPF19, AQR, ZNF830, ISY1, and PPIE. Identified in a pentameric intron-binding (IB) complex composed of AQR, XAB2, ISY1, ZNF830 and PPIE that is incorporated into the spliceosome as a preassembled complex. The IB complex does not contain PRPF19.

It is found in the nucleus. In terms of biological role, involved in pre-mRNA splicing as component of the spliceosome. Involved in transcription-coupled repair (TCR), transcription and pre-mRNA splicing. The protein is Pre-mRNA-splicing factor SYF1 (Xab2) of Mus musculus (Mouse).